A 203-amino-acid polypeptide reads, in one-letter code: Small ribosomal subunit protein uS3 (203 aa).

This sequence belongs to the universal ribosomal protein uS3 family. In terms of assembly, part of the 30S ribosomal subunit. Forms a tight complex with proteins S10 and S14.

Its function is as follows. Binds the lower part of the 30S subunit head. Binds mRNA in the 70S ribosome, positioning it for translation. This Carsonella ruddii (strain PV) protein is Small ribosomal subunit protein uS3.